The chain runs to 160 residues: 2-amino-4-hydroxy-6-hydroxymethyldihydropteridine pyrophosphokinase (160 aa).

The protein belongs to the HPPK family.

The catalysed reaction is 6-hydroxymethyl-7,8-dihydropterin + ATP = (7,8-dihydropterin-6-yl)methyl diphosphate + AMP + H(+). It participates in cofactor biosynthesis; tetrahydrofolate biosynthesis; 2-amino-4-hydroxy-6-hydroxymethyl-7,8-dihydropteridine diphosphate from 7,8-dihydroneopterin triphosphate: step 4/4. Catalyzes the transfer of pyrophosphate from adenosine triphosphate (ATP) to 6-hydroxymethyl-7,8-dihydropterin, an enzymatic step in folate biosynthesis pathway. The chain is 2-amino-4-hydroxy-6-hydroxymethyldihydropteridine pyrophosphokinase (folK) from Aquifex aeolicus (strain VF5).